The sequence spans 88 residues: UPF0223 protein YktA (88 aa).

The protein belongs to the UPF0223 family.

The sequence is that of UPF0223 protein YktA (yktA) from Bacillus subtilis (strain 168).